A 55-amino-acid polypeptide reads, in one-letter code: Beta-toxin Cn7 (55 aa).

In terms of domain architecture, LCN-type CS-alpha/beta spans 1–55; the sequence is KEGYIVNYHDGCKYECYKLGDNDYCLRECKLRVGKGAGGYCYAFACWCTHLYEQA. Disulfide bonds link Cys-16-Cys-41, Cys-25-Cys-46, and Cys-29-Cys-48.

It belongs to the long (3 C-C) scorpion toxin superfamily. Sodium channel inhibitor family. Beta subfamily. In terms of tissue distribution, expressed by the venom gland.

The protein resides in the secreted. Functionally, beta toxins bind voltage-independently at site-4 of sodium channels (Nav) and shift the voltage of activation toward more negative potentials thereby affecting sodium channel activation and promoting spontaneous and repetitive firing. This is Beta-toxin Cn7 from Centruroides noxius (Mexican scorpion).